The following is a 107-amino-acid chain: L-rhamnose mutarotase (107 aa).

A substrate-binding site is contributed by Tyr21. The Proton donor role is filled by His25. Substrate-binding positions include Tyr44 and 79-80 (WW). The disordered stretch occupies residues 88 to 107 (ETNPDNSPKTNSLKEVFHLD). Polar residues predominate over residues 90-100 (NPDNSPKTNSL).

Belongs to the rhamnose mutarotase family. In terms of assembly, homodimer.

It localises to the cytoplasm. It catalyses the reaction alpha-L-rhamnose = beta-L-rhamnose. Its pathway is carbohydrate metabolism; L-rhamnose metabolism. In terms of biological role, involved in the anomeric conversion of L-rhamnose. The chain is L-rhamnose mutarotase from Flavobacterium johnsoniae (strain ATCC 17061 / DSM 2064 / JCM 8514 / BCRC 14874 / CCUG 350202 / NBRC 14942 / NCIMB 11054 / UW101) (Cytophaga johnsonae).